Consider the following 52-residue polypeptide: MAVPKKRTSISKKRIRKKNWKRKGYWTSLKAFSLGKSLSTGNSKSFFVQQNK.

The protein belongs to the bacterial ribosomal protein bL32 family.

The protein localises to the plastid. Its subcellular location is the chloroplast. The sequence is that of Large ribosomal subunit protein bL32c from Arabis hirsuta (Hairy rock-cress).